A 140-amino-acid chain; its full sequence is Transcription antitermination protein NusB (140 aa).

The protein belongs to the NusB family.

Involved in transcription antitermination. Required for transcription of ribosomal RNA (rRNA) genes. Binds specifically to the boxA antiterminator sequence of the ribosomal RNA (rrn) operons. The chain is Transcription antitermination protein NusB from Sorangium cellulosum (strain So ce56) (Polyangium cellulosum (strain So ce56)).